The primary structure comprises 395 residues: Na(+)/H(+) antiporter NhaA 1 (395 aa).

The next 11 helical transmembrane spans lie at 11-31, 63-83, 99-119, 129-149, 158-178, 183-203, 223-243, 258-278, 282-302, 332-352, and 364-384; these read FFSS…LAMV, MLLW…GLEV, VFPV…YLAF, GWAI…ALLG, IFLM…IALF, LSML…ALNL, VLKS…MIPL, VLHP…NAGV, GVTL…GLFI, IMAV…IATL, and WAKL…YLIL.

It belongs to the NhaA Na(+)/H(+) (TC 2.A.33) antiporter family.

Its subcellular location is the cell inner membrane. It catalyses the reaction Na(+)(in) + 2 H(+)(out) = Na(+)(out) + 2 H(+)(in). Functionally, na(+)/H(+) antiporter that extrudes sodium in exchange for external protons. The chain is Na(+)/H(+) antiporter NhaA 1 from Klebsiella pneumoniae subsp. pneumoniae (strain ATCC 700721 / MGH 78578).